Here is a 446-residue protein sequence, read N- to C-terminus: Tubulin beta-4 chain (446 aa).

GTP contacts are provided by Gln11, Glu69, Ser138, Gly142, Thr143, Gly144, Asn204, and Asn226. Glu69 is a Mg(2+) binding site. The span at Asp417–Gln426 shows a compositional bias: polar residues. Residues Asp417–Glu446 are disordered. The span at Thr429–Glu446 shows a compositional bias: acidic residues.

The protein belongs to the tubulin family. As to quaternary structure, dimer of alpha and beta chains. A typical microtubule is a hollow water-filled tube with an outer diameter of 25 nm and an inner diameter of 15 nM. Alpha-beta heterodimers associate head-to-tail to form protofilaments running lengthwise along the microtubule wall with the beta-tubulin subunit facing the microtubule plus end conferring a structural polarity. Microtubules usually have 13 protofilaments but different protofilament numbers can be found in some organisms and specialized cells. The cofactor is Mg(2+).

The protein resides in the cytoplasm. It localises to the cytoskeleton. Functionally, tubulin is the major constituent of microtubules, a cylinder consisting of laterally associated linear protofilaments composed of alpha- and beta-tubulin heterodimers. Microtubules grow by the addition of GTP-tubulin dimers to the microtubule end, where a stabilizing cap forms. Below the cap, tubulin dimers are in GDP-bound state, owing to GTPase activity of alpha-tubulin. The polypeptide is Tubulin beta-4 chain (TUBB4) (Eleusine indica (Goosegrass)).